The following is a 436-amino-acid chain: Glutamyl-tRNA reductase (436 aa).

Substrate is bound by residues 52–55, Ser-105, 110–112, and Gln-116; these read TCHR and EDQ. Catalysis depends on Cys-53, which acts as the Nucleophile. 184–189 serves as a coordination point for NADP(+); sequence GAGEMG.

It belongs to the glutamyl-tRNA reductase family. As to quaternary structure, homodimer.

It carries out the reaction (S)-4-amino-5-oxopentanoate + tRNA(Glu) + NADP(+) = L-glutamyl-tRNA(Glu) + NADPH + H(+). It participates in porphyrin-containing compound metabolism; protoporphyrin-IX biosynthesis; 5-aminolevulinate from L-glutamyl-tRNA(Glu): step 1/2. Its function is as follows. Catalyzes the NADPH-dependent reduction of glutamyl-tRNA(Glu) to glutamate 1-semialdehyde (GSA). The protein is Glutamyl-tRNA reductase of Halobacterium salinarum (strain ATCC 29341 / DSM 671 / R1).